Here is a 485-residue protein sequence, read N- to C-terminus: Proline betaine:corrinoid methyltransferase (485 aa).

Belongs to the trimethylamine methyltransferase family. As to quaternary structure, the proline betaine:THF methyl transfer system is composed of two methyltransferases, MtpB and MtqA, and the corrinoid protein MtqC.

The catalysed reaction is Co(I)-[quaternary-amine-specific corrinoid protein] + L-proline betaine + H(+) = methyl-Co(III)-[quaternary-amine-specific corrinoid protein] + N-methyl-L-proline. Its function is as follows. Involved in the degradation of the quaternary amine L-proline betaine. Component of a corrinoid-dependent methyltransferase system that transfers a methyl group from L-proline betaine to tetrahydrofolate (THF), forming methyl-THF, a key intermediate in the Wood-Ljungdahl acetogenesis pathway. MtpB catalyzes the methylation of the corrinoid protein MtqC, using L-proline betaine as the methyl donor. Shows weak activity with some other quaternary amines, including carnitine, phosphocholine, glycine betaine or betonicine, but cannot methylate free cob(I)alamin. The polypeptide is Proline betaine:corrinoid methyltransferase (Eubacterium limosum).